Here is a 424-residue protein sequence, read N- to C-terminus: Probable threonylcarbamoyladenosine tRNA methylthiotransferase (424 aa).

The MTTase N-terminal domain maps to 1–106; the sequence is MRVAIETYGC…VVDAVYSALN (106 aa). Cys10, Cys44, Cys73, Cys143, Cys147, and Cys150 together coordinate [4Fe-4S] cluster. The 231-residue stretch at 129-359 folds into the Radical SAM core domain; it reads LRENAIAIVS…TDLMRKIGLE (231 aa). The 59-residue stretch at 362–420 folds into the TRAM domain; the sequence is KRFVGKKLRVLVTKEGKNGRNLARMNSYRAVVTEGAVGEFVEVKIKDCRFNYLIGQLAA.

This sequence belongs to the methylthiotransferase family. CDKAL1 subfamily. Requires [4Fe-4S] cluster as cofactor.

The catalysed reaction is N(6)-L-threonylcarbamoyladenosine(37) in tRNA + (sulfur carrier)-SH + AH2 + 2 S-adenosyl-L-methionine = 2-methylsulfanyl-N(6)-L-threonylcarbamoyladenosine(37) in tRNA + (sulfur carrier)-H + 5'-deoxyadenosine + L-methionine + A + S-adenosyl-L-homocysteine + 2 H(+). Catalyzes the methylthiolation of N6-threonylcarbamoyladenosine (t(6)A), leading to the formation of 2-methylthio-N6-threonylcarbamoyladenosine (ms(2)t(6)A) at position 37 in tRNAs that read codons beginning with adenine. This is Probable threonylcarbamoyladenosine tRNA methylthiotransferase from Archaeoglobus fulgidus (strain ATCC 49558 / DSM 4304 / JCM 9628 / NBRC 100126 / VC-16).